The sequence spans 365 residues: Heme A synthase (365 aa).

8 helical membrane passes run 17–37 (AVRI…LVGG), 107–127 (VIGI…AIGP), 132–152 (ALWG…WMVA), 164–184 (VRLA…VWTL), 203–223 (AIAL…VAGL), 264–283 (QFDH…WHAI), 296–316 (GALW…LTVL), and 320–340 (PIGL…LAVL). Position 267 (His-267) interacts with heme. Residue His-327 participates in heme binding.

Belongs to the COX15/CtaA family. Type 2 subfamily. As to quaternary structure, interacts with CtaB. Heme b serves as cofactor.

Its subcellular location is the cell membrane. It carries out the reaction Fe(II)-heme o + 2 A + H2O = Fe(II)-heme a + 2 AH2. Its pathway is porphyrin-containing compound metabolism; heme A biosynthesis; heme A from heme O: step 1/1. In terms of biological role, catalyzes the conversion of heme O to heme A by two successive hydroxylations of the methyl group at C8. The first hydroxylation forms heme I, the second hydroxylation results in an unstable dihydroxymethyl group, which spontaneously dehydrates, resulting in the formyl group of heme A. The chain is Heme A synthase from Rhodopseudomonas palustris (strain HaA2).